The chain runs to 969 residues: RNA polymerase-associated protein RapA (969 aa).

A Helicase ATP-binding domain is found at 164–334; sequence EVGRRHAPRV…FARLRLLDPD (171 aa). 177–184 provides a ligand contact to ATP; it reads DEVGLGKT. The DEAH box motif lies at 280–283; sequence DEAH. One can recognise a Helicase C-terminal domain in the interval 492-646; that stretch reads RVNWLLEKVK…TCPTGRAVYD (155 aa).

It belongs to the SNF2/RAD54 helicase family. RapA subfamily. As to quaternary structure, interacts with the RNAP. Has a higher affinity for the core RNAP than for the holoenzyme. Its ATPase activity is stimulated by binding to RNAP.

Functionally, transcription regulator that activates transcription by stimulating RNA polymerase (RNAP) recycling in case of stress conditions such as supercoiled DNA or high salt concentrations. Probably acts by releasing the RNAP, when it is trapped or immobilized on tightly supercoiled DNA. Does not activate transcription on linear DNA. Probably not involved in DNA repair. This is RNA polymerase-associated protein RapA from Vibrio campbellii (strain ATCC BAA-1116).